The following is a 344-amino-acid chain: Dihydroorotase (344 aa).

Zn(2+) is bound by residues His13 and His15. Residues 15 to 17 (HLR) and Asn41 each bind substrate. Residues Lys99, His136, and His174 each coordinate Zn(2+). Lys99 is subject to N6-carboxylysine. His136 is a substrate binding site. Substrate is bound at residue Leu219. Residue Asp247 coordinates Zn(2+). Asp247 is a catalytic residue. Residues His251 and Ala263 each contribute to the substrate site.

This sequence belongs to the metallo-dependent hydrolases superfamily. DHOase family. Class II DHOase subfamily. As to quaternary structure, homodimer. Requires Zn(2+) as cofactor.

The enzyme catalyses (S)-dihydroorotate + H2O = N-carbamoyl-L-aspartate + H(+). It functions in the pathway pyrimidine metabolism; UMP biosynthesis via de novo pathway; (S)-dihydroorotate from bicarbonate: step 3/3. Catalyzes the reversible cyclization of carbamoyl aspartate to dihydroorotate. This Idiomarina loihiensis (strain ATCC BAA-735 / DSM 15497 / L2-TR) protein is Dihydroorotase.